We begin with the raw amino-acid sequence, 493 residues long: Ubiquitin carboxyl-terminal hydrolase 14 (493 aa).

Residues 4–80 (YSVTVKWGKE…MMGSADALPE (77 aa)) enclose the Ubiquitin-like domain. Thr52 is subject to Phosphothreonine. The region spanning 105-483 (CGLTNLGNTC…IAYVLLYGPR (379 aa)) is the USP domain. Cys114 serves as the catalytic Nucleophile. Residues Ser143 and Ser148 each carry the phosphoserine modification. Residue Thr235 is modified to Phosphothreonine. A phosphoserine mark is found at Ser237, Ser302, and Ser432. The active-site Proton acceptor is the His435. Residue Lys449 is modified to N6-acetyllysine.

It belongs to the peptidase C19 family. USP14/UBP6 subfamily. Homodimer (Potential). Associates with the 26S proteasome. Interacts with FANCC, CXCR4 and ERN1. Interacts with TRIM14; this interaction recruits USP14 to cleave ubiquitin chains of CGAS and KDM4D.

It localises to the cytoplasm. The protein localises to the cell membrane. The enzyme catalyses Thiol-dependent hydrolysis of ester, thioester, amide, peptide and isopeptide bonds formed by the C-terminal Gly of ubiquitin (a 76-residue protein attached to proteins as an intracellular targeting signal).. In terms of biological role, proteasome-associated deubiquitinase which releases ubiquitin from the proteasome targeted ubiquitinated proteins. Ensures the regeneration of ubiquitin at the proteasome. Is a reversibly associated subunit of the proteasome and a large fraction of proteasome-free protein exists within the cell. Required for the degradation of the chemokine receptor CXCR4 which is critical for CXCL12-induced cell chemotaxis. Also serves as a physiological inhibitor of endoplasmic reticulum-associated degradation (ERAD) under the non-stressed condition by inhibiting the degradation of unfolded endoplasmic reticulum proteins via interaction with ERN1. Indispensable for synaptic development and function at neuromuscular junctions (NMJs). Plays a role in the innate immune defense against viruses by stabilizing the viral DNA sensor CGAS and thus inhibiting its autophagic degradation. Inhibits OPTN-mediated selective autophagic degradation of KDM4D and thereby negatively regulates H3K9me2 and H3K9me3. In Pan troglodytes (Chimpanzee), this protein is Ubiquitin carboxyl-terminal hydrolase 14 (USP14).